Reading from the N-terminus, the 190-residue chain is Potassium-transporting ATPase KdpC subunit (190 aa).

Residues 10-30 (TFIFLLLITGGVYPLLTTVLG) traverse the membrane as a helical segment.

This sequence belongs to the KdpC family. The system is composed of three essential subunits: KdpA, KdpB and KdpC.

It localises to the cell inner membrane. Part of the high-affinity ATP-driven potassium transport (or Kdp) system, which catalyzes the hydrolysis of ATP coupled with the electrogenic transport of potassium into the cytoplasm. This subunit acts as a catalytic chaperone that increases the ATP-binding affinity of the ATP-hydrolyzing subunit KdpB by the formation of a transient KdpB/KdpC/ATP ternary complex. This is Potassium-transporting ATPase KdpC subunit from Shigella dysenteriae serotype 1 (strain Sd197).